Reading from the N-terminus, the 64-residue chain is Large ribosomal subunit protein bL35 (64 aa).

This sequence belongs to the bacterial ribosomal protein bL35 family.

This is Large ribosomal subunit protein bL35 from Micrococcus luteus (strain ATCC 4698 / DSM 20030 / JCM 1464 / CCM 169 / CCUG 5858 / IAM 1056 / NBRC 3333 / NCIMB 9278 / NCTC 2665 / VKM Ac-2230) (Micrococcus lysodeikticus).